The following is a 427-amino-acid chain: uncharacterized protein (427 aa).

A coiled-coil region spans residues 135-168; that stretch reads PILKQKLVSLESKVKKIDKEMEKHNDLLKEIQEN.

This is an uncharacterized protein from Arabidopsis thaliana (Mouse-ear cress).